We begin with the raw amino-acid sequence, 553 residues long: Methyl-coenzyme M reductase I subunit alpha (553 aa).

Gln-150 is a coenzyme F430 binding site. Coenzyme B-binding positions include Arg-228, 259-260 (KH), and Arg-273. At Arg-274 the chain carries 5-methylarginine. Residues Tyr-335 and Tyr-447 each coordinate coenzyme M.

It belongs to the methyl-coenzyme M reductase alpha subunit family. MCR is a hexamer of two alpha, two beta, and two gamma chains, forming a dimer of heterotrimers. It depends on coenzyme F430 as a cofactor. Post-translationally, is methylated on C5 of Arg-274 by the methyltransferase MJ0841. This post-translational methylation, despite being not essential in vivo, plays a role for the stability and structural integrity of MCR.

It is found in the cytoplasm. The enzyme catalyses coenzyme B + methyl-coenzyme M = methane + coenzyme M-coenzyme B heterodisulfide. The protein operates within one-carbon metabolism; methyl-coenzyme M reduction; methane from methyl-coenzyme M: step 1/1. Its function is as follows. Component of the methyl-coenzyme M reductase (MCR) I that catalyzes the reductive cleavage of methyl-coenzyme M (CoM-S-CH3 or 2-(methylthio)ethanesulfonate) using coenzyme B (CoB or 7-mercaptoheptanoylthreonine phosphate) as reductant which results in the production of methane and the mixed heterodisulfide of CoB and CoM (CoM-S-S-CoB). This is the final step in methanogenesis. The protein is Methyl-coenzyme M reductase I subunit alpha (mcrA) of Methanocaldococcus jannaschii (strain ATCC 43067 / DSM 2661 / JAL-1 / JCM 10045 / NBRC 100440) (Methanococcus jannaschii).